Reading from the N-terminus, the 848-residue chain is DNA-binding protein RFX6 (848 aa).

The segment at residues 56-131 (TLQWLEDNYI…YHYYGIGIKE (76 aa)) is a DNA-binding region (RFX-type winged-helix).

The protein belongs to the RFX family. As to expression, expressed in progenitors and hormone expressing cells of the islet lineage.

It localises to the nucleus. Functionally, transcription factor required to direct islet cell differentiation during endocrine pancreas development. This is DNA-binding protein RFX6 (rfx6) from Danio rerio (Zebrafish).